The primary structure comprises 301 residues: tRNA dimethylallyltransferase (301 aa).

8–15 (GPTAVGKT) lines the ATP pocket. 10–15 (TAVGKT) provides a ligand contact to substrate. Residues 33–36 (DSRQ) are interaction with substrate tRNA.

Belongs to the IPP transferase family. Monomer. Requires Mg(2+) as cofactor.

It carries out the reaction adenosine(37) in tRNA + dimethylallyl diphosphate = N(6)-dimethylallyladenosine(37) in tRNA + diphosphate. Its function is as follows. Catalyzes the transfer of a dimethylallyl group onto the adenine at position 37 in tRNAs that read codons beginning with uridine, leading to the formation of N6-(dimethylallyl)adenosine (i(6)A). This chain is tRNA dimethylallyltransferase, found in Thermosipho africanus (strain TCF52B).